A 173-amino-acid polypeptide reads, in one-letter code: Calcium-binding protein 5 (173 aa).

EF-hand domains follow at residues 28 to 63 (DEIEELREAFLEFDKDRDGFISCKDLGNLMRTMGYM), 82 to 99 (GRVDFDDFVELMTPKLLA), 105 to 140 (IGVQEMRDAFKEFDANGDGEITLGELQQAMQRLLGD), and 142 to 173 (LTSQEISEVVQEADINGDGTVDFEEFVKMMSR). 4 residues coordinate Ca(2+): Asp41, Asp43, Asp45, and Asp52. The Ca(2+) site is built by Asp118, Asn120, Asp122, Glu124, Glu129, Asp155, Asn157, Asp159, Thr161, and Glu166.

As to quaternary structure, interacts with CACNA1C (via C-terminal CDB motif) in a calcium-dependent manner. Interacts with STXBP1. Interacts with MYO6. In terms of tissue distribution, expressed in the retina (at protein level).

The protein resides in the cytoplasm. In terms of biological role, inhibits calcium-dependent inactivation of L-type calcium channel and shifts voltage dependence of activation to more depolarized membrane potentials. Involved in the transmission of light signals. May positively regulate neurotransmitter vesicle endocytosis and exocytosis in a salt-dependent manner. May play a role in the extension and network organization of neurites. The chain is Calcium-binding protein 5 (CABP5) from Bos taurus (Bovine).